We begin with the raw amino-acid sequence, 308 residues long: Cell division protein FtsX (308 aa).

The Cytoplasmic segment spans residues 1-24 (MISRFFRHLFEALKSLKRNGWMTV). Residues 25 to 45 (AAVSSVMITLTLVAIFASVIF) traverse the membrane as a helical segment. Residues 46 to 178 (NTAKLATDIE…NTERLFKLAS (133 aa)) are Extracellular-facing. The chain crosses the membrane as a helical span at residues 179 to 199 (FIRVWGLGIAALLIFIAVFLI). The Cytoplasmic portion of the chain corresponds to 200 to 236 (SNTIRITIISRSREIQIMRLVGAKNSYIRGPFLLEGA). A helical transmembrane segment spans residues 237 to 257 (FIGLLGAIAPSVLVFIVYQIV). Topologically, residues 258 to 276 (YQSVNKSLVGQNLSMISPD) are extracellular. Residues 277-297 (LFSPLMIALLFVIGVFIGSLG) form a helical membrane-spanning segment. The Cytoplasmic segment spans residues 298–308 (SGISMRRFLKI).

The protein belongs to the ABC-4 integral membrane protein family. FtsX subfamily. Homodimer. Interacts with FtsE; forms a membrane-associated complex. Interacts (via large extracellular loop) with PcsB (via N-terminal coiled-coil domain). This interaction directs PcsB to equatorial and septal sites of dividing cells.

The protein localises to the cell membrane. In terms of biological role, part of the ABC transporter FtsEX involved in asymmetric cellular division facilitating the initiation of sporulation. Required in maintaining normal growth and cellular morphology. The protein is Cell division protein FtsX of Streptococcus pneumoniae serotype 2 (strain D39 / NCTC 7466).